Here is a 248-residue protein sequence, read N- to C-terminus: 4-hydroxy-tetrahydrodipicolinate reductase (248 aa).

Residue 13 to 18 (GITGRL) participates in NAD(+) binding. Residue Arg-36 participates in NADP(+) binding. NAD(+) contacts are provided by residues 84-86 (GTT) and 108-111 (AANF). His-140 (proton donor/acceptor) is an active-site residue. His-141 provides a ligand contact to (S)-2,3,4,5-tetrahydrodipicolinate. The Proton donor role is filled by Lys-144. (S)-2,3,4,5-tetrahydrodipicolinate is bound at residue 150–151 (GT).

Belongs to the DapB family.

It is found in the cytoplasm. It carries out the reaction (S)-2,3,4,5-tetrahydrodipicolinate + NAD(+) + H2O = (2S,4S)-4-hydroxy-2,3,4,5-tetrahydrodipicolinate + NADH + H(+). The catalysed reaction is (S)-2,3,4,5-tetrahydrodipicolinate + NADP(+) + H2O = (2S,4S)-4-hydroxy-2,3,4,5-tetrahydrodipicolinate + NADPH + H(+). Its pathway is amino-acid biosynthesis; L-lysine biosynthesis via DAP pathway; (S)-tetrahydrodipicolinate from L-aspartate: step 4/4. Functionally, catalyzes the conversion of 4-hydroxy-tetrahydrodipicolinate (HTPA) to tetrahydrodipicolinate. In Gluconobacter oxydans (strain 621H) (Gluconobacter suboxydans), this protein is 4-hydroxy-tetrahydrodipicolinate reductase.